Here is a 306-residue protein sequence, read N- to C-terminus: N-acetylmuramic acid 6-phosphate etherase (306 aa).

The SIS domain maps to 59–222; that stretch reads TAQALGRGGR…STGVMVCLGK (164 aa). Catalysis depends on Glu-87, which acts as the Proton donor. Glu-118 is an active-site residue.

It belongs to the GCKR-like family. MurNAc-6-P etherase subfamily. In terms of assembly, homodimer.

The enzyme catalyses N-acetyl-D-muramate 6-phosphate + H2O = N-acetyl-D-glucosamine 6-phosphate + (R)-lactate. The protein operates within amino-sugar metabolism; N-acetylmuramate degradation. In terms of biological role, specifically catalyzes the cleavage of the D-lactyl ether substituent of MurNAc 6-phosphate, producing GlcNAc 6-phosphate and D-lactate. The sequence is that of N-acetylmuramic acid 6-phosphate etherase from Rippkaea orientalis (strain PCC 8801 / RF-1) (Cyanothece sp. (strain PCC 8801)).